We begin with the raw amino-acid sequence, 1232 residues long: Anion exchange protein 3 (1232 aa).

The span at 1–11 (MANGVIPPPGG) shows a compositional bias: pro residues. 2 disordered regions span residues 1 to 316 (MANG…KLDR) and 429 to 499 (NDDK…DSHR). Residues 1-708 (MANGVIPPPG…DLRDALHSQC (708 aa)) lie on the Cytoplasmic side of the membrane. Residues 58-75 (DPEKPSRSYSERDFEFHR) are compositionally biased toward basic and acidic residues. Composition is skewed to basic residues over residues 76-97 (HTSH…KLRR) and 104-113 (RHTRRKRKKE). The segment covering 134–152 (VDEEEEEEEEEEGESEAEP) has biased composition (acidic residues). A phosphoserine mark is found at serine 167, serine 170, serine 175, and serine 198. Residues 267–279 (DDMKSHRLEDNPG) are compositionally biased toward basic and acidic residues. Positions 280 to 289 (VRRHLVKKPS) are enriched in basic residues. An Omega-N-methylarginine modification is found at arginine 295. The span at 305–316 (LRRKKKKKKLDR) shows a compositional bias: basic residues. Residues 440-450 (NPSSSSMNSVL) are compositionally biased toward polar residues. Positions 481 to 499 (HDPDAKEKPLHMPGGDSHR) are enriched in basic and acidic residues. Helical transmembrane passes span 709–731 (VAAV…GLLG), 737–774 (LMGV…LLVF), 794–816 (VWVG…SFLV), 826–847 (IFAF…YKVF), and 893–910 (ALLS…AFFL). A membrane (anion exchange) region spans residues 709-1232 (VAAVLFIYFA…DEYNELHMPV (524 aa)). The Cytoplasmic segment spans residues 911–925 (RKFRNSRFLGGKARR). Transmembrane regions (helical) follow at residues 926–946 (IIGD…DYSI), 980–1002 (PFPP…LIFM), 1028–1049 (LLLI…LTAA), 1083–1128 (VTGV…IQLS), and 1155–1191 (MHLF…TVPL). Cysteine 1165 is lipidated: S-palmitoyl cysteine.

The protein belongs to the anion exchanger (TC 2.A.31) family.

The protein localises to the cell membrane. It catalyses the reaction hydrogencarbonate(in) + chloride(out) = hydrogencarbonate(out) + chloride(in). Its function is as follows. Sodium-independent anion exchanger which mediates the electroneutral exchange of chloride for bicarbonate ions across the cell membrane. May be involved in the regulation of intracellular pH, and the modulation of cardiac action potential. This chain is Anion exchange protein 3 (SLC4A3), found in Plecturocebus moloch (Dusky titi monkey).